The following is a 214-amino-acid chain: Pyridoxine/pyridoxamine 5'-phosphate oxidase (214 aa).

Substrate contacts are provided by residues 8–11 and Lys-66; that span reads RINY. Residues 61-66, 76-77, Arg-82, Lys-83, and Gln-105 contribute to the FMN site; these read RIVLIK and FT. Tyr-123, Arg-127, and Ser-131 together coordinate substrate. FMN-binding positions include 140–141 and Trp-184; that span reads QS. 190–192 contacts substrate; it reads RLH. Arg-194 serves as a coordination point for FMN.

It belongs to the pyridoxamine 5'-phosphate oxidase family. As to quaternary structure, homodimer. FMN is required as a cofactor.

It carries out the reaction pyridoxamine 5'-phosphate + O2 + H2O = pyridoxal 5'-phosphate + H2O2 + NH4(+). The catalysed reaction is pyridoxine 5'-phosphate + O2 = pyridoxal 5'-phosphate + H2O2. Its pathway is cofactor metabolism; pyridoxal 5'-phosphate salvage; pyridoxal 5'-phosphate from pyridoxamine 5'-phosphate: step 1/1. It functions in the pathway cofactor metabolism; pyridoxal 5'-phosphate salvage; pyridoxal 5'-phosphate from pyridoxine 5'-phosphate: step 1/1. In terms of biological role, catalyzes the oxidation of either pyridoxine 5'-phosphate (PNP) or pyridoxamine 5'-phosphate (PMP) into pyridoxal 5'-phosphate (PLP). This chain is Pyridoxine/pyridoxamine 5'-phosphate oxidase, found in Burkholderia ambifaria (strain ATCC BAA-244 / DSM 16087 / CCUG 44356 / LMG 19182 / AMMD) (Burkholderia cepacia (strain AMMD)).